A 751-amino-acid chain; its full sequence is Putative tyrosine-protein kinase EpsB (751 aa).

Topologically, residues 1-31 (MTQNLSQPPAVNAPESELDLVRYLDVLVANR) are cytoplasmic. Residues 32-52 (WLIAGIAAVVMLLGATYAFLA) form a helical membrane-spanning segment. The Periplasmic segment spans residues 53–444 (RPVYEADVLV…VPEEPVKPKK (392 aa)). Residues 445-465 (LTVTALAGVLGVVLGVVAAFV) form a helical membrane-spanning segment. At 466-751 (RNTLFGGITE…PSAEAEAESA (286 aa)) the chain is on the cytoplasmic side.

This sequence belongs to the etk/wzc family.

The protein resides in the cell inner membrane. It catalyses the reaction L-tyrosyl-[protein] + ATP = O-phospho-L-tyrosyl-[protein] + ADP + H(+). Probably involved in polymerization and/or export of exopolysaccharide EPS I which functions as a virulence factor. May be involved in an ATP-dependent process in the pathway for EPS I production, possibly export of the trimeric repeat units across the inner membrane or their polymerization. The polypeptide is Putative tyrosine-protein kinase EpsB (epsB) (Ralstonia nicotianae (strain ATCC BAA-1114 / GMI1000) (Ralstonia solanacearum)).